We begin with the raw amino-acid sequence, 353 residues long: UDP-3-O-acylglucosamine N-acyltransferase (353 aa).

The active-site Proton acceptor is His246.

This sequence belongs to the transferase hexapeptide repeat family. LpxD subfamily. In terms of assembly, homotrimer.

The catalysed reaction is a UDP-3-O-[(3R)-3-hydroxyacyl]-alpha-D-glucosamine + a (3R)-hydroxyacyl-[ACP] = a UDP-2-N,3-O-bis[(3R)-3-hydroxyacyl]-alpha-D-glucosamine + holo-[ACP] + H(+). The protein operates within bacterial outer membrane biogenesis; LPS lipid A biosynthesis. In terms of biological role, catalyzes the N-acylation of UDP-3-O-acylglucosamine using 3-hydroxyacyl-ACP as the acyl donor. Is involved in the biosynthesis of lipid A, a phosphorylated glycolipid that anchors the lipopolysaccharide to the outer membrane of the cell. This is UDP-3-O-acylglucosamine N-acyltransferase from Chlorobaculum tepidum (strain ATCC 49652 / DSM 12025 / NBRC 103806 / TLS) (Chlorobium tepidum).